A 497-amino-acid chain; its full sequence is Glycerol kinase (497 aa).

Position 12 (Thr-12) interacts with ADP. ATP contacts are provided by Thr-12, Thr-13, and Ser-14. Thr-12 is a sn-glycerol 3-phosphate binding site. Arg-16 lines the ADP pocket. The sn-glycerol 3-phosphate site is built by Arg-82, Glu-83, Tyr-134, and Asp-243. Arg-82, Glu-83, Tyr-134, Asp-243, and Gln-244 together coordinate glycerol. The ADP site is built by Thr-265 and Gly-308. Residues Thr-265, Gly-308, Gln-312, and Gly-409 each coordinate ATP. ADP contacts are provided by Gly-409 and Asn-413.

This sequence belongs to the FGGY kinase family. Homotetramer and homodimer (in equilibrium).

It carries out the reaction glycerol + ATP = sn-glycerol 3-phosphate + ADP + H(+). It functions in the pathway polyol metabolism; glycerol degradation via glycerol kinase pathway; sn-glycerol 3-phosphate from glycerol: step 1/1. With respect to regulation, activated by phosphorylation and inhibited by fructose 1,6-bisphosphate (FBP). Key enzyme in the regulation of glycerol uptake and metabolism. Catalyzes the phosphorylation of glycerol to yield sn-glycerol 3-phosphate. This chain is Glycerol kinase, found in Caldanaerobacter subterraneus subsp. tengcongensis (strain DSM 15242 / JCM 11007 / NBRC 100824 / MB4) (Thermoanaerobacter tengcongensis).